The sequence spans 173 residues: Probable F-box protein At1g27490 (173 aa).

One can recognise an F-box domain in the interval 1-46 (MEWSLPVDLQEEILSRVPAKSLARWKSTPKQWKGPISIEFLHLLRS).

This chain is Probable F-box protein At1g27490, found in Arabidopsis thaliana (Mouse-ear cress).